The chain runs to 1395 residues: DNA polymerase II large subunit (1395 aa).

2 disordered regions span residues 279–320 and 657–704; these read IGKD…PRVE and GNRM…MSDT. The span at 283 to 312 shows a compositional bias: acidic residues; the sequence is EADEGDSAEDANGDDAGEGADDDGGDEADE. 2 stretches are compositionally biased toward basic and acidic residues: residues 661 to 671 and 690 to 700; these read GRPEKSERRDL and DVAKATKHADD.

The protein belongs to the archaeal DNA polymerase II family. As to quaternary structure, heterodimer of a large subunit and a small subunit. In terms of processing, this protein undergoes a protein self splicing that involves a post-translational excision of the intervening region (intein) followed by peptide ligation.

It catalyses the reaction DNA(n) + a 2'-deoxyribonucleoside 5'-triphosphate = DNA(n+1) + diphosphate. It carries out the reaction Exonucleolytic cleavage in the 3'- to 5'-direction to yield nucleoside 5'-phosphates.. Its function is as follows. Possesses two activities: a DNA synthesis (polymerase) and an exonucleolytic activity that degrades single-stranded DNA in the 3'- to 5'-direction. Has a template-primer preference which is characteristic of a replicative DNA polymerase. This is DNA polymerase II large subunit from Haloarcula marismortui (strain ATCC 43049 / DSM 3752 / JCM 8966 / VKM B-1809) (Halobacterium marismortui).